A 380-amino-acid chain; its full sequence is Cytochrome b (380 aa).

The next 4 membrane-spanning stretches (helical) occupy residues 34–54, 78–100, 113–133, and 179–199; these read FGSL…ILAM, WLMR…AHMG, TWNI…MGYV, and FFAF…VHLL. The heme b site is built by His-84 and His-98. Residues His-183 and His-197 each coordinate heme b. Residue His-202 coordinates a ubiquinone. Helical transmembrane passes span 225 to 245, 289 to 309, 324 to 344, and 349 to 369; these read FSWK…TITL, LGGV…MLTH, VIFW…AAPV, and ITLG…APMI.

This sequence belongs to the cytochrome b family. In terms of assembly, the main subunits of complex b-c1 are: cytochrome b, cytochrome c1 and the Rieske protein. Requires heme b as cofactor.

Its subcellular location is the mitochondrion inner membrane. In terms of biological role, component of the ubiquinol-cytochrome c reductase complex (complex III or cytochrome b-c1 complex) that is part of the mitochondrial respiratory chain. The b-c1 complex mediates electron transfer from ubiquinol to cytochrome c. Contributes to the generation of a proton gradient across the mitochondrial membrane that is then used for ATP synthesis. This is Cytochrome b (mt:Cyt-b) from Xenoturbella bocki (Marine worm).